The primary structure comprises 352 residues: Selenide, water dikinase (352 aa).

C23 is an active-site residue. Residues K26 and S54–D56 each bind ATP. D57 is a binding site for Mg(2+). ATP-binding positions include D74, D97, and G145 to S147. Residue D97 participates in Mg(2+) binding. D233 provides a ligand contact to Mg(2+).

This sequence belongs to the selenophosphate synthase 1 family. Class I subfamily. In terms of assembly, homodimer. The cofactor is Mg(2+).

The catalysed reaction is hydrogenselenide + ATP + H2O = selenophosphate + AMP + phosphate + 2 H(+). Synthesizes selenophosphate from selenide and ATP. The polypeptide is Selenide, water dikinase (Shewanella baltica (strain OS223)).